The following is a 122-amino-acid chain: Large ribosomal subunit protein uL14 (122 aa).

It belongs to the universal ribosomal protein uL14 family. As to quaternary structure, part of the 50S ribosomal subunit. Forms a cluster with proteins L3 and L19. In the 70S ribosome, L14 and L19 interact and together make contacts with the 16S rRNA in bridges B5 and B8.

Functionally, binds to 23S rRNA. Forms part of two intersubunit bridges in the 70S ribosome. The polypeptide is Large ribosomal subunit protein uL14 (Mycoplasma genitalium (strain ATCC 33530 / DSM 19775 / NCTC 10195 / G37) (Mycoplasmoides genitalium)).